We begin with the raw amino-acid sequence, 283 residues long: Digeranylgeranylglyceryl phosphate synthase (283 aa).

The next 8 helical transmembrane spans lie at 5-27 (VEII…AILA), 37-57 (AMLA…YFDY), 85-105 (LLFI…DTWI), 128-148 (PLIG…FAGY), 152-172 (EGLI…MTTA), 203-223 (AIIA…LYIY), 228-248 (INYL…AVLL), and 263-283 (LKTG…TITF).

This sequence belongs to the UbiA prenyltransferase family. DGGGP synthase subfamily. Requires Mg(2+) as cofactor.

It localises to the cell membrane. It catalyses the reaction sn-3-O-(geranylgeranyl)glycerol 1-phosphate + (2E,6E,10E)-geranylgeranyl diphosphate = 2,3-bis-O-(geranylgeranyl)-sn-glycerol 1-phosphate + diphosphate. The protein operates within membrane lipid metabolism; glycerophospholipid metabolism. Functionally, prenyltransferase that catalyzes the transfer of the geranylgeranyl moiety of geranylgeranyl diphosphate (GGPP) to the C2 hydroxyl of (S)-3-O-geranylgeranylglyceryl phosphate (GGGP). This reaction is the second ether-bond-formation step in the biosynthesis of archaeal membrane lipids. This chain is Digeranylgeranylglyceryl phosphate synthase, found in Methanobrevibacter smithii (strain ATCC 35061 / DSM 861 / OCM 144 / PS).